We begin with the raw amino-acid sequence, 506 residues long: Galactose/methyl galactoside import ATP-binding protein MglA (506 aa).

2 ABC transporter domains span residues 14-249 (LEMK…VGRS) and 264-506 (VMLE…SLYL). 46–53 (GENGAGKS) lines the ATP pocket.

Belongs to the ABC transporter superfamily. Galactose/methyl galactoside importer (TC 3.A.1.2.3) family. As to quaternary structure, the complex is composed of one ATP-binding protein (MglA), two transmembrane proteins (MglC) and a solute-binding protein (MglB).

It localises to the cell inner membrane. The enzyme catalyses D-galactose(out) + ATP + H2O = D-galactose(in) + ADP + phosphate + H(+). It catalyses the reaction methyl beta-D-galactoside(out) + ATP + H2O = methyl beta-D-galactoside(in) + ADP + phosphate + H(+). In terms of biological role, part of the ABC transporter complex MglABC involved in galactose/methyl galactoside import. Responsible for energy coupling to the transport system. The sequence is that of Galactose/methyl galactoside import ATP-binding protein MglA from Sodalis glossinidius (strain morsitans).